The primary structure comprises 121 residues: Large ribosomal subunit protein bL20 (121 aa).

This sequence belongs to the bacterial ribosomal protein bL20 family.

Binds directly to 23S ribosomal RNA and is necessary for the in vitro assembly process of the 50S ribosomal subunit. It is not involved in the protein synthesizing functions of that subunit. This Persephonella marina (strain DSM 14350 / EX-H1) protein is Large ribosomal subunit protein bL20.